The sequence spans 261 residues: MWFLILFLDLSLGQIDAAPPGQSRVIGGYKCEKNSQPWQVALYSFTKYLCGGVLIDPSWVITAAHCSSNNYQVWLGRNNLLEDEPFAQHRLVSQSFPHPDYKPFLMRNHTRKPGDDHSNDLMLLHLSQPADITDGVKVIDLPTEEPKVGSTCLASGWGSTKPLIWEFPDDLQCVNIHLLSNEKCIKAYKEKVTDLMLCAGELEGGKDTCTGDSGGPLLCDGVLQGITSWGSVPCAKTNMPAIYTKLIKFTSWIKEVMKENP.

The signal sequence occupies residues M1–A18. Positions P19–R24 are cleaved as a propeptide — activation peptide. The region spanning V25–K258 is the Peptidase S1 domain. 5 cysteine pairs are disulfide-bonded: C31–C173, C50–C66, C152–C219, C184–C198, and C209–C234. The active-site Charge relay system is the H65. N-linked (GlcNAc...) asparagine glycosylation occurs at N108. D120 (charge relay system) is an active-site residue. S213 (charge relay system) is an active-site residue.

It belongs to the peptidase S1 family. Kallikrein subfamily. Kidney and submandibular gland. Not expressed in liver, pancreas, spleen, parotid, testis, cortex, prostate, ovary and pituitary.

The catalysed reaction is Preferential cleavage of Arg-|-Xaa bonds in small molecule substrates. Highly selective action to release kallidin (lysyl-bradykinin) from kininogen involves hydrolysis of Met-|-Xaa or Leu-|-Xaa.. Its function is as follows. Glandular kallikreins cleave Met-Lys and Arg-Ser bonds in kininogen to release Lys-bradykinin. Predominant kallikrein protein in the kidney. This is Glandular kallikrein-7, submandibular/renal (Klk7) from Rattus norvegicus (Rat).